A 565-amino-acid chain; its full sequence is Periplasmic trehalase (565 aa).

Positions methionine 1–alanine 30 are cleaved as a signal peptide. Substrate contacts are provided by residues arginine 152, tryptophan 159–aspartate 160, asparagine 196, arginine 205–glutamine 207, arginine 277–glutamate 279, and glycine 310. Active-site proton donor/acceptor residues include aspartate 312 and glutamate 496. Glutamate 511 serves as a coordination point for substrate. The tract at residues cysteine 539–proline 565 is disordered.

This sequence belongs to the glycosyl hydrolase 37 family. In terms of assembly, monomer.

It localises to the periplasm. It carries out the reaction alpha,alpha-trehalose + H2O = alpha-D-glucose + beta-D-glucose. Provides the cells with the ability to utilize trehalose at high osmolarity by splitting it into glucose molecules that can subsequently be taken up by the phosphotransferase-mediated uptake system. In Escherichia coli O7:K1 (strain IAI39 / ExPEC), this protein is Periplasmic trehalase.